A 950-amino-acid chain; its full sequence is Bifunctional glutamine synthetase adenylyltransferase/adenylyl-removing enzyme (950 aa).

The tract at residues 1 to 440 (MLPLPSELQI…VFDHLIGDDA (440 aa)) is adenylyl removase. Residues 449-950 (HGLYKSLWQD…KWLVAAPSDV (502 aa)) form an adenylyl transferase region.

Belongs to the GlnE family. Mg(2+) serves as cofactor.

The enzyme catalyses [glutamine synthetase]-O(4)-(5'-adenylyl)-L-tyrosine + phosphate = [glutamine synthetase]-L-tyrosine + ADP. It catalyses the reaction [glutamine synthetase]-L-tyrosine + ATP = [glutamine synthetase]-O(4)-(5'-adenylyl)-L-tyrosine + diphosphate. Its function is as follows. Involved in the regulation of glutamine synthetase GlnA, a key enzyme in the process to assimilate ammonia. When cellular nitrogen levels are high, the C-terminal adenylyl transferase (AT) inactivates GlnA by covalent transfer of an adenylyl group from ATP to specific tyrosine residue of GlnA, thus reducing its activity. Conversely, when nitrogen levels are low, the N-terminal adenylyl removase (AR) activates GlnA by removing the adenylyl group by phosphorolysis, increasing its activity. The regulatory region of GlnE binds the signal transduction protein PII (GlnB) which indicates the nitrogen status of the cell. The polypeptide is Bifunctional glutamine synthetase adenylyltransferase/adenylyl-removing enzyme (Yersinia enterocolitica serotype O:8 / biotype 1B (strain NCTC 13174 / 8081)).